The following is a 146-amino-acid chain: Angiogenin (146 aa).

A signal peptide spans 1–24 (MAMSLCPLLLVFVLGLGLTPPSLA). Pyrrolidone carboxylic acid is present on Q25. H37 serves as the catalytic Proton acceptor. A tRNA-binding site is contributed by R45. Intrachain disulfides connect C50–C105, C63–C116, and C81–C131. A Nucleolar localization signal motif is present at residues 55-59 (VRRHL). C105 and I127 together coordinate tRNA. The Proton donor role is filled by H138.

This sequence belongs to the pancreatic ribonuclease family. Homodimer. Interacts with RNH1; inhibiting ANG ribonuclease activity. Interacts with PCNA.

The protein resides in the secreted. It localises to the nucleus. The protein localises to the nucleolus. It is found in the cytoplasm. Its subcellular location is the stress granule. Its activity is regulated as follows. Has weak tRNA ribonuclease activity by itself due to partial autoinhibition by its C-terminus, which folds into a short alpha-helix that partially occludes the substrate-binding site. In absence of stress, the ribonuclease activity is inhibited by RNH1 in the cytoplasm. In response to stress, dissociates from RNH1 in the cytoplasm and associates with cytoplasmic ribosomes with vacant A-sites: ribosomes directly activate the tRNA ribonuclease activity of ANG by refolding the C-terminal alpha-helix. In response to stress, the angiogenic activity of ANG is inhibited by RNH1 in the nucleus. In terms of biological role, secreted ribonuclease that can either promote or restrict cell proliferation of target cells, depending on the context. Endocytosed in target cells via its receptor PLXNB2 and translocates to the cytoplasm or nucleus. Under stress conditions, localizes to the cytoplasm and promotes the assembly of stress granules (SGs): specifically cleaves a subset of tRNAs within anticodon loops to produce tRNA-derived stress-induced fragments (tiRNAs), resulting in translation repression and inhibition of cell proliferation. tiRNas also prevent formation of apoptosome, thereby promoting cell survival. Preferentially cleaves RNAs between a pyrimidine and an adenosine residue, suggesting that it cleaves the anticodon loop of tRNA(Ala) (32-UUAGCAU-38) after positions 33 and 36. Cleaves a subset of tRNAs, including tRNA(Ala), tRNA(Glu), tRNA(Gly), tRNA(Lys), tRNA(Val), tRNA(His), tRNA(Asp) and tRNA(Sec). Under growth conditions and in differentiated cells, translocates to the nucleus and stimulates ribosomal RNA (rRNA) transcription, including that containing the initiation site sequences of 45S rRNA, thereby promoting cell growth and proliferation. Angiogenin induces vascularization of normal and malignant tissues via its ability to promote rRNA transcription. Involved in hematopoietic stem and progenitor cell (HSPC) growth and survival by promoting rRNA transcription in growth conditions and inhibiting translation in response to stress, respectively. Mediates the crosstalk between myeloid and intestinal epithelial cells to protect the intestinal epithelial barrier integrity: secreted by myeloid cells and promotes intestinal epithelial cells proliferation and survival. Also mediates osteoclast-endothelial cell crosstalk in growing bone: produced by osteoclasts and protects the neighboring vascular cells against senescence by promoting rRNA transcription. This is Angiogenin (ANG) from Equus caballus (Horse).